The following is a 148-amino-acid chain: Large ribosomal subunit protein bL9 (148 aa).

This sequence belongs to the bacterial ribosomal protein bL9 family.

In terms of biological role, binds to the 23S rRNA. The protein is Large ribosomal subunit protein bL9 of Bifidobacterium adolescentis (strain ATCC 15703 / DSM 20083 / NCTC 11814 / E194a).